A 226-amino-acid polypeptide reads, in one-letter code: PKHD-type hydroxylase Pfl01_0799 (226 aa).

Residues 78 to 178 (KVFPPLLNCY…RYASFFWTQS (101 aa)) form the Fe2OG dioxygenase domain. The Fe cation site is built by His-96, Asp-98, and His-159. A 2-oxoglutarate-binding site is contributed by Arg-169.

Fe(2+) serves as cofactor. It depends on L-ascorbate as a cofactor.

The polypeptide is PKHD-type hydroxylase Pfl01_0799 (Pseudomonas fluorescens (strain Pf0-1)).